A 555-amino-acid chain; its full sequence is Formate--tetrahydrofolate ligase (555 aa).

Position 65 to 72 (65 to 72 (TPAGEGKS)) interacts with ATP.

The protein belongs to the formate--tetrahydrofolate ligase family.

The catalysed reaction is (6S)-5,6,7,8-tetrahydrofolate + formate + ATP = (6R)-10-formyltetrahydrofolate + ADP + phosphate. Its pathway is one-carbon metabolism; tetrahydrofolate interconversion. The polypeptide is Formate--tetrahydrofolate ligase (Staphylococcus aureus (strain COL)).